The sequence spans 449 residues: Adenylosuccinate lyase (449 aa).

N(6)-(1,2-dicarboxyethyl)-AMP-binding positions include 9–10 (RY), 75–77 (KHD), and 102–103 (TS). H150 serves as the catalytic Proton donor/acceptor. Residue Q224 participates in N(6)-(1,2-dicarboxyethyl)-AMP binding. S275 (proton donor/acceptor) is an active-site residue. N(6)-(1,2-dicarboxyethyl)-AMP-binding positions include S276, 281-283 (KMN), and 320-324 (SSERI).

Belongs to the lyase 1 family. Adenylosuccinate lyase subfamily. In terms of assembly, homotetramer. Residues from neighboring subunits contribute catalytic and substrate-binding residues to each active site.

It catalyses the reaction N(6)-(1,2-dicarboxyethyl)-AMP = fumarate + AMP. The enzyme catalyses (2S)-2-[5-amino-1-(5-phospho-beta-D-ribosyl)imidazole-4-carboxamido]succinate = 5-amino-1-(5-phospho-beta-D-ribosyl)imidazole-4-carboxamide + fumarate. Its pathway is purine metabolism; AMP biosynthesis via de novo pathway; AMP from IMP: step 2/2. It participates in purine metabolism; IMP biosynthesis via de novo pathway; 5-amino-1-(5-phospho-D-ribosyl)imidazole-4-carboxamide from 5-amino-1-(5-phospho-D-ribosyl)imidazole-4-carboxylate: step 2/2. In terms of biological role, catalyzes two reactions in de novo purine nucleotide biosynthesis. Catalyzes the breakdown of 5-aminoimidazole- (N-succinylocarboxamide) ribotide (SAICAR or 2-[5-amino-1-(5-phospho-beta-D-ribosyl)imidazole-4-carboxamido]succinate) to 5-aminoimidazole-4-carboxamide ribotide (AICAR or 5-amino-1-(5-phospho-beta-D-ribosyl)imidazole-4-carboxamide) and fumarate, and of adenylosuccinate (ADS or N(6)-(1,2-dicarboxyethyl)-AMP) to adenosine monophosphate (AMP) and fumarate. The protein is Adenylosuccinate lyase (purB) of Methanothermobacter thermautotrophicus (strain ATCC 29096 / DSM 1053 / JCM 10044 / NBRC 100330 / Delta H) (Methanobacterium thermoautotrophicum).